A 409-amino-acid chain; its full sequence is Lissencephaly-1 homolog (409 aa).

Residues 7–39 enclose the LisH domain; that stretch reads QREELNQAIADYLGTNGYADSLEAFRKEADLST. Residues 54 to 81 adopt a coiled-coil conformation; it reads TSVIRLQKKVMELEAKLTEAEKEVIEGA. WD repeat units lie at residues 104-145, 146-185, 189-228, 231-270, 273-332, 335-374, and 377-409; these read GHRA…RSLK, GHTDSVQDVAFDAQGKLLVSCSADLSIKLWDFQQSYACVK, GHDHNVSSVAFVPAGDYVLSASRDRTIKMWEVATGYCVKT, GHREWVRMVRVHIEGSLFATCSNDHTIRVWLTNSKDCKVE, DHEH…CLLT, GHDNWVRGLAFHPGGKYLVSASDDKTIRVWDLRNKRCMKT, and AHQHFCTSIDFHKAHPYVISGSVDQTVKVWECR.

It belongs to the WD repeat LIS1/nudF family.

Its subcellular location is the cytoplasm. The protein localises to the cytoskeleton. It is found in the microtubule organizing center. It localises to the centrosome. Functionally, positively regulates the activity of the minus-end directed microtubule motor protein dynein. May enhance dynein-mediated microtubule sliding by targeting dynein to the microtubule plus end. Required for several dynein- and microtubule-dependent processes. This Drosophila willistoni (Fruit fly) protein is Lissencephaly-1 homolog.